A 933-amino-acid polypeptide reads, in one-letter code: Clumping factor A (933 aa).

A signal peptide spans 1 to 39 (MNMKKKEKHAIRKKSIGVASVLVGTLIGFGLLSSKEADA). A YSIRK-G/S signaling motif motif is present at residues 9–20 (HAIRKKSIGVAS). 2 disordered regions span residues 34–200 (SKEA…SNKD) and 529–904 (FNNG…SEDE). The ligand binding A region stretch occupies residues 40–542 (SENSVTQSDS…SGSGDGIDKP (503 aa)). Low complexity predominate over residues 47–65 (SDSASNESKSNDSSSVSAA). Positions 71-105 (TNVSDTKTSSNTNNGETSVAQNPAQQETTQSSSTN) are enriched in polar residues. 2 stretches are compositionally biased toward low complexity: residues 106 to 132 (ATTEETPVTGEATTTTTNQANTPATTQ) and 143 to 162 (NQTSNETTSNDTNTVSSVNS). Over residues 163-200 (PQNSTNAENVSTTQDTSTEATPSNNESAPQSTDASNKD) the composition is skewed to polar residues. Over residues 547 to 565 (QPDEPGEIEPIPEDSDSDP) the composition is skewed to acidic residues. The span at 566 to 598 (GSDSGSDSNSDSGSDSGSDSTSDSGSDSASDSD) shows a compositional bias: low complexity. A compositionally biased stretch (acidic residues) spans 599-861 (SASDSDSASD…DSDSESDSNS (263 aa)). Residues 862 to 880 (DSESGSNNNVVPPNSPKNG) show a composition bias toward low complexity. Residues 887-896 (NEAKDSKEPL) are compositionally biased toward basic and acidic residues. Residues 896 to 900 (LPDTG) carry the LPXTG sorting signal motif. The residue at position 899 (Thr-899) is a Pentaglycyl murein peptidoglycan amidated threonine. Positions 900 to 933 (GSEDEANTSLIWGLLASIGSLLLFRRKKENKDKK) are cleaved as a propeptide — removed by sortase.

It belongs to the serine-aspartate repeat-containing protein (SDr) family.

Its subcellular location is the secreted. It localises to the cell wall. In terms of biological role, cell surface-associated protein implicated in virulence. Promotes bacterial attachment exclusively to the gamma-chain of human fibrinogen. Induces formation of bacterial clumps. This Staphylococcus aureus (strain COL) protein is Clumping factor A (clfA).